Consider the following 41-residue polypeptide: Alpha-1B-glycoprotein (41 aa).

N-linked (GlcNAc...) asparagine glycosylation is present at asparagine 23.

As to quaternary structure, interacts with CRISP3. In terms of processing, glycosylated. In terms of tissue distribution, plasma.

It is found in the secreted. The protein is Alpha-1B-glycoprotein (A1BG) of Equus caballus (Horse).